The chain runs to 190 residues: Potassium-transporting ATPase KdpC subunit (190 aa).

Residues 10–30 (VLFAVLTLICGVIYPYAITGI) traverse the membrane as a helical segment.

This sequence belongs to the KdpC family. As to quaternary structure, the system is composed of three essential subunits: KdpA, KdpB and KdpC.

It is found in the cell inner membrane. Its function is as follows. Part of the high-affinity ATP-driven potassium transport (or Kdp) system, which catalyzes the hydrolysis of ATP coupled with the electrogenic transport of potassium into the cytoplasm. This subunit acts as a catalytic chaperone that increases the ATP-binding affinity of the ATP-hydrolyzing subunit KdpB by the formation of a transient KdpB/KdpC/ATP ternary complex. This Herminiimonas arsenicoxydans protein is Potassium-transporting ATPase KdpC subunit.